The sequence spans 147 residues: Large ribosomal subunit protein uL13 (147 aa).

This sequence belongs to the universal ribosomal protein uL13 family. As to quaternary structure, part of the 50S ribosomal subunit.

Its function is as follows. This protein is one of the early assembly proteins of the 50S ribosomal subunit, although it is not seen to bind rRNA by itself. It is important during the early stages of 50S assembly. This Rhodococcus opacus (strain B4) protein is Large ribosomal subunit protein uL13.